The sequence spans 79 residues: Acyl carrier protein (79 aa).

The Carrier domain occupies 2-77; that stretch reads SDVAERVKKI…DAVNFLEKAT (76 aa). Serine 37 is subject to O-(pantetheine 4'-phosphoryl)serine.

The protein belongs to the acyl carrier protein (ACP) family. Post-translationally, 4'-phosphopantetheine is transferred from CoA to a specific serine of apo-ACP by AcpS. This modification is essential for activity because fatty acids are bound in thioester linkage to the sulfhydryl of the prosthetic group.

It localises to the cytoplasm. It participates in lipid metabolism; fatty acid biosynthesis. In terms of biological role, carrier of the growing fatty acid chain in fatty acid biosynthesis. The chain is Acyl carrier protein from Methylocella silvestris (strain DSM 15510 / CIP 108128 / LMG 27833 / NCIMB 13906 / BL2).